The chain runs to 102 residues: Co-chaperonin GroES (102 aa).

This sequence belongs to the GroES chaperonin family. Heptamer of 7 subunits arranged in a ring. Interacts with the chaperonin GroEL.

It is found in the cytoplasm. Together with the chaperonin GroEL, plays an essential role in assisting protein folding. The GroEL-GroES system forms a nano-cage that allows encapsulation of the non-native substrate proteins and provides a physical environment optimized to promote and accelerate protein folding. GroES binds to the apical surface of the GroEL ring, thereby capping the opening of the GroEL channel. The sequence is that of Co-chaperonin GroES from Chlamydia muridarum (strain MoPn / Nigg).